Here is a 155-residue protein sequence, read N- to C-terminus: Transcription antitermination protein NusB (155 aa).

It belongs to the NusB family.

Functionally, involved in transcription antitermination. Required for transcription of ribosomal RNA (rRNA) genes. Binds specifically to the boxA antiterminator sequence of the ribosomal RNA (rrn) operons. This is Transcription antitermination protein NusB from Azoarcus sp. (strain BH72).